A 250-amino-acid chain; its full sequence is MGLSRLGIETAYIGKVGSDEEGRILLADFEREGVSTDFVIRAEGRSGTAMIFVDEKGNRAILVDPGVNDTIAYDEIDVDSARKYDLIHLTSFICKNGLDSLNSQKRIVEEFDSVSFDPGMPYAERGLGDMEKILKNTTIFLPNRQEIEMLFSEDYRTAAERCIEMGIEIVAVKLGSEGCWIKKGDREVTVKPVSTKVVDTTGAGDAFNAGFLYGYLKGKDIEECGRLGNFVAAKCIEKYGAREGLPRSVD.

This sequence belongs to the carbohydrate kinase PfkB family.

This is an uncharacterized protein from Archaeoglobus fulgidus (strain ATCC 49558 / DSM 4304 / JCM 9628 / NBRC 100126 / VC-16).